A 704-amino-acid chain; its full sequence is Glycine--tRNA ligase beta subunit (704 aa).

This sequence belongs to the class-II aminoacyl-tRNA synthetase family. In terms of assembly, tetramer of two alpha and two beta subunits.

It is found in the cytoplasm. It carries out the reaction tRNA(Gly) + glycine + ATP = glycyl-tRNA(Gly) + AMP + diphosphate. This is Glycine--tRNA ligase beta subunit from Rhizobium etli (strain CIAT 652).